We begin with the raw amino-acid sequence, 343 residues long: Arginine-hydroxylase NDUFAF5, mitochondrial (343 aa).

The N-terminal 29 residues, 1-29 (MLRRVVLSRLYARLGGPAVSAGRGGRRGV), are a transit peptide targeting the mitochondrion. The segment at 18–40 (AVSAGRGGRRGVASSVPPSGSTS) is disordered.

Belongs to the methyltransferase superfamily. In terms of assembly, interacts with NDUFAF8, leading to stabilize NDUFAF5. Interacts with NDUFS7. Interacts with PYURF (via TRM112 domain); the interaction is direct and stabilizes NDUFAF5 protein.

The protein localises to the mitochondrion inner membrane. Arginine hydroxylase that mediates hydroxylation of 'Arg-111' of NDUFS7 and is involved in the assembly of mitochondrial NADH:ubiquinone oxidoreductase complex (complex I, MT-ND1) at early stages. May also have methyltransferase activity. This is Arginine-hydroxylase NDUFAF5, mitochondrial from Rattus norvegicus (Rat).